A 294-amino-acid polypeptide reads, in one-letter code: Pyridoxal 5'-phosphate synthase subunit PdxS (294 aa).

Asp-24 contacts D-ribose 5-phosphate. Catalysis depends on Lys-81, which acts as the Schiff-base intermediate with D-ribose 5-phosphate. Gly-153 contacts D-ribose 5-phosphate. Residue Arg-165 participates in D-glyceraldehyde 3-phosphate binding. D-ribose 5-phosphate contacts are provided by residues Gly-214 and 235–236 (GS).

It belongs to the PdxS/SNZ family. Homohexamer and homododecamer. In the presence of PdxT, forms a dodecamer of heterodimers.

The catalysed reaction is aldehydo-D-ribose 5-phosphate + D-glyceraldehyde 3-phosphate + L-glutamine = pyridoxal 5'-phosphate + L-glutamate + phosphate + 3 H2O + H(+). The protein operates within cofactor biosynthesis; pyridoxal 5'-phosphate biosynthesis. Catalyzes the formation of pyridoxal 5'-phosphate from ribose 5-phosphate (RBP), glyceraldehyde 3-phosphate (G3P) and ammonia. The ammonia is provided by the PdxT subunit. Can also use ribulose 5-phosphate and dihydroxyacetone phosphate as substrates, resulting from enzyme-catalyzed isomerization of RBP and G3P, respectively. The sequence is that of Pyridoxal 5'-phosphate synthase subunit PdxS from Bacillus subtilis (strain 168).